Consider the following 515-residue polypeptide: Protein disulfide-isomerase (515 aa).

Residues 1-20 (MRTFAPWILSLLGASAVASA) form the signal peptide. 2 Thioredoxin domains span residues 21-136 (ADAT…QSLP) and 343-470 (VLDD…ENGK). Active-site nucleophile residues include cysteine 58, cysteine 61, cysteine 393, and cysteine 396. 2 disulfide bridges follow: cysteine 58-cysteine 61 and cysteine 393-cysteine 396. Basic and acidic residues-rich tracts occupy residues 472 to 496 (KVDA…RAAS) and 506 to 515 (SDDKSEHDEL). The disordered stretch occupies residues 472-515 (KVDALEVDPKKEQESGDATETRAASDETETPAATSDDKSEHDEL). Positions 512–515 (HDEL) match the Prevents secretion from ER motif.

The protein belongs to the protein disulfide isomerase family.

The protein resides in the endoplasmic reticulum lumen. It catalyses the reaction Catalyzes the rearrangement of -S-S- bonds in proteins.. Its function is as follows. Participates in the folding of proteins containing disulfide bonds, may be involved in glycosylation, prolyl hydroxylation and triglyceride transfer. The chain is Protein disulfide-isomerase (pdiA) from Aspergillus oryzae (strain ATCC 42149 / RIB 40) (Yellow koji mold).